The primary structure comprises 156 residues: ATP synthase subunit b (156 aa).

Residues 12–32 (VAFFIFVLFCMKYVWPPVIAA) form a helical membrane-spanning segment.

The protein belongs to the ATPase B chain family. In terms of assembly, F-type ATPases have 2 components, F(1) - the catalytic core - and F(0) - the membrane proton channel. F(1) has five subunits: alpha(3), beta(3), gamma(1), delta(1), epsilon(1). F(0) has three main subunits: a(1), b(2) and c(10-14). The alpha and beta chains form an alternating ring which encloses part of the gamma chain. F(1) is attached to F(0) by a central stalk formed by the gamma and epsilon chains, while a peripheral stalk is formed by the delta and b chains.

The protein resides in the cell inner membrane. Its function is as follows. F(1)F(0) ATP synthase produces ATP from ADP in the presence of a proton or sodium gradient. F-type ATPases consist of two structural domains, F(1) containing the extramembraneous catalytic core and F(0) containing the membrane proton channel, linked together by a central stalk and a peripheral stalk. During catalysis, ATP synthesis in the catalytic domain of F(1) is coupled via a rotary mechanism of the central stalk subunits to proton translocation. Functionally, component of the F(0) channel, it forms part of the peripheral stalk, linking F(1) to F(0). This Pseudomonas syringae pv. tomato (strain ATCC BAA-871 / DC3000) protein is ATP synthase subunit b.